We begin with the raw amino-acid sequence, 406 residues long: 4-hydroxy-3-methylbut-2-en-1-yl diphosphate synthase (ferredoxin) (406 aa).

[4Fe-4S] cluster is bound by residues cysteine 313, cysteine 316, cysteine 347, and glutamate 354.

It belongs to the IspG family. Requires [4Fe-4S] cluster as cofactor.

The catalysed reaction is (2E)-4-hydroxy-3-methylbut-2-enyl diphosphate + 2 oxidized [2Fe-2S]-[ferredoxin] + H2O = 2-C-methyl-D-erythritol 2,4-cyclic diphosphate + 2 reduced [2Fe-2S]-[ferredoxin] + H(+). It functions in the pathway isoprenoid biosynthesis; isopentenyl diphosphate biosynthesis via DXP pathway; isopentenyl diphosphate from 1-deoxy-D-xylulose 5-phosphate: step 5/6. In terms of biological role, converts 2C-methyl-D-erythritol 2,4-cyclodiphosphate (ME-2,4cPP) into 1-hydroxy-2-methyl-2-(E)-butenyl 4-diphosphate. The protein is 4-hydroxy-3-methylbut-2-en-1-yl diphosphate synthase (ferredoxin) of Picosynechococcus sp. (strain ATCC 27264 / PCC 7002 / PR-6) (Agmenellum quadruplicatum).